A 467-amino-acid chain; its full sequence is DNA polymerase IV (467 aa).

Positions 5-187 constitute a UmuC domain; it reads VLHIDMDAFF…LPVGALWGVG (183 aa). The Mg(2+) site is built by Asp9 and Asp104. Residue Glu105 is part of the active site. 2 disordered regions span residues 364–386 and 428–449; these read PDTD…VEAP and TKGR…DPLD.

It belongs to the DNA polymerase type-Y family. Monomer. Requires Mg(2+) as cofactor.

Its subcellular location is the cytoplasm. The enzyme catalyses DNA(n) + a 2'-deoxyribonucleoside 5'-triphosphate = DNA(n+1) + diphosphate. In terms of biological role, poorly processive, error-prone DNA polymerase involved in untargeted mutagenesis. Copies undamaged DNA at stalled replication forks, which arise in vivo from mismatched or misaligned primer ends. These misaligned primers can be extended by PolIV. Exhibits no 3'-5' exonuclease (proofreading) activity. May be involved in translesional synthesis, in conjunction with the beta clamp from PolIII. This chain is DNA polymerase IV, found in Corynebacterium glutamicum (strain R).